Reading from the N-terminus, the 897-residue chain is Probable bifunctional chitinase/lysozyme (897 aa).

A signal peptide spans methionine 1–alanine 24. The region spanning methionine 25–glutamate 91 is the Chitin-binding type-3 1 domain. Disordered regions lie at residues cysteine 90–serine 127, threonine 182–lysine 222, and glutamine 287–asparagine 333. Over residues serine 95 to asparagine 111 the composition is skewed to low complexity. 2 stretches are compositionally biased toward polar residues: residues glycine 113–serine 127 and threonine 182–proline 197. Residues valine 128–threonine 194 enclose the Chitin-binding type-3 2 domain. Positions glutamine 198 to glutamine 216 are enriched in pro residues. Residues valine 229–serine 295 enclose the Chitin-binding type-3 3 domain. Positions aspartate 309–proline 318 are enriched in pro residues. Positions asparagine 322 to asparagine 333 are enriched in polar residues. 2 consecutive Chitin-binding type-3 domains span residues leucine 337–glutamate 403 and alanine 459–asparagine 529. One can recognise a GH18 domain in the interval lysine 586–leucine 877. A disulfide bond links cysteine 628 and cysteine 673. Glutamate 700 (proton donor) is an active-site residue.

The protein belongs to the glycosyl hydrolase 18 family. Chitinase class II subfamily.

The protein localises to the periplasm. The catalysed reaction is Random endo-hydrolysis of N-acetyl-beta-D-glucosaminide (1-&gt;4)-beta-linkages in chitin and chitodextrins.. The enzyme catalyses Hydrolysis of (1-&gt;4)-beta-linkages between N-acetylmuramic acid and N-acetyl-D-glucosamine residues in a peptidoglycan and between N-acetyl-D-glucosamine residues in chitodextrins.. Functionally, bifunctional enzyme with lysozyme/chitinase activity. The protein is Probable bifunctional chitinase/lysozyme (chiA) of Escherichia coli (strain K12).